Reading from the N-terminus, the 378-residue chain is Glutamate 5-kinase (378 aa).

An ATP-binding site is contributed by K20. Substrate-binding residues include S60, D147, and N159. ATP-binding positions include 179 to 180 (TD) and 221 to 227 (TGGMATK). One can recognise a PUA domain in the interval 286-364 (AGDIVIDAGA…QEIYKVLGYE (79 aa)).

It belongs to the glutamate 5-kinase family.

The protein resides in the cytoplasm. It carries out the reaction L-glutamate + ATP = L-glutamyl 5-phosphate + ADP. The protein operates within amino-acid biosynthesis; L-proline biosynthesis; L-glutamate 5-semialdehyde from L-glutamate: step 1/2. In terms of biological role, catalyzes the transfer of a phosphate group to glutamate to form L-glutamate 5-phosphate. This is Glutamate 5-kinase from Photobacterium profundum (strain SS9).